We begin with the raw amino-acid sequence, 216 residues long: Small ribosomal subunit protein uS3c (216 aa).

Residues 43-118 (IKNYIQKNRR…KLNIAIVKVT (76 aa)) enclose the KH type-2 domain.

Belongs to the universal ribosomal protein uS3 family. As to quaternary structure, part of the 30S ribosomal subunit.

It localises to the plastid. The protein resides in the chloroplast. The protein is Small ribosomal subunit protein uS3c (rps3) of Phaseolus angularis (Azuki bean).